A 470-amino-acid polypeptide reads, in one-letter code: 6-phospho-beta-galactosidase (470 aa).

D-galactose 6-phosphate is bound by residues glutamine 19, histidine 116, asparagine 159, glutamate 160, and asparagine 297. The active-site Proton donor is glutamate 160. Glutamate 375 serves as the catalytic Nucleophile. Residues serine 430, tryptophan 431, lysine 437, and tyrosine 439 each contribute to the D-galactose 6-phosphate site.

Belongs to the glycosyl hydrolase 1 family.

The catalysed reaction is a 6-phospho-beta-D-galactoside + H2O = D-galactose 6-phosphate + an alcohol. Its pathway is carbohydrate metabolism; lactose degradation; D-galactose 6-phosphate and beta-D-glucose from lactose 6-phosphate: step 1/1. This Staphylococcus aureus (strain COL) protein is 6-phospho-beta-galactosidase.